The primary structure comprises 886 residues: Alanine--tRNA ligase (886 aa).

H564, H568, C666, and H670 together coordinate Zn(2+).

This sequence belongs to the class-II aminoacyl-tRNA synthetase family. Requires Zn(2+) as cofactor.

It localises to the cytoplasm. The catalysed reaction is tRNA(Ala) + L-alanine + ATP = L-alanyl-tRNA(Ala) + AMP + diphosphate. Functionally, catalyzes the attachment of alanine to tRNA(Ala) in a two-step reaction: alanine is first activated by ATP to form Ala-AMP and then transferred to the acceptor end of tRNA(Ala). Also edits incorrectly charged Ser-tRNA(Ala) and Gly-tRNA(Ala) via its editing domain. The sequence is that of Alanine--tRNA ligase from Prochlorococcus marinus (strain MIT 9312).